The sequence spans 360 residues: Glycoprotein-N-acetylgalactosamine 3-beta-galactosyltransferase 1 (360 aa).

At 1-7 (MSIICAK) the chain is on the cytoplasmic side. A helical; Signal-anchor for type II membrane protein transmembrane segment spans residues 8–28 (VAWLPLTLGTAMGFLITFYLA). At 29–360 (RTLLERNSQP…SDFLEPPMES (332 aa)) the chain is on the lumenal side. The cysteines at positions 79 and 103 are disulfide-linked. UDP is bound by residues Met-82, Glu-126, Gly-127, Arg-128, and Lys-134. The N-linked (GlcNAc...) asparagine glycan is linked to Asn-148. Asp-157 lines the UDP pocket. Positions 157 and 159 each coordinate Mn(2+). N-linked (GlcNAc...) asparagine glycosylation occurs at Asn-173. Cysteines 220 and 234 form a disulfide. Residue Trp-274 participates in a glycoprotein binding. A disulfide bridge connects residues Cys-289 and Cys-290. Residues His-298 and Tyr-299 each contribute to the UDP site. His-298 serves as a coordination point for Mn(2+). 2 N-linked (GlcNAc...) asparagine glycosylation sites follow: Asn-341 and Asn-347.

This sequence belongs to the glycosyltransferase 31 family. Beta3-Gal-T subfamily. Homodimer; disulfide-linked. It depends on Mn(2+) as a cofactor.

Its subcellular location is the membrane. It carries out the reaction an N-acetyl-alpha-D-galactosaminyl derivative + UDP-alpha-D-galactose = a beta-D-galactosyl-(1-&gt;3)-N-acetyl-alpha-D-galactosaminyl derivative + UDP + H(+). Its pathway is protein modification; protein glycosylation. In terms of biological role, glycosyltransferase that generates the core 1 O-glycan Gal-beta1-3GalNAc-alpha1-Ser/Thr (T antigen), which is a precursor for many extended O-glycans in glycoproteins. The sequence is that of Glycoprotein-N-acetylgalactosamine 3-beta-galactosyltransferase 1 (c1galt1) from Xenopus laevis (African clawed frog).